Reading from the N-terminus, the 245-residue chain is Histone deacetylase HDT1 (245 aa).

The residue at position 1 (Met1) is an N-acetylmethionine. Required to repress transcription stretches follow at residues 2–5 and 101–162; these read EFWG and GYSE…EEEE. Residues 99-245 form a disordered region; it reads PQGYSEEEEE…HNKAKHAAAK (147 aa). Acidic residues predominate over residues 103-113; the sequence is SEEEEEEEEEV. Residues 114–124 show a composition bias toward low complexity; the sequence is PAGNAAKAVAK. Residues 137–162 show a composition bias toward acidic residues; the sequence is DDEEDESDSDGMDEDDSDGEDSEEEE. Low complexity predominate over residues 178–195; sequence TTPKAPVSAKKAKVAVTP. Positions 208–234 are enriched in polar residues; it reads ANQSPKSASQVSCGSCKKTFNSGNALE. Ser211 carries the post-translational modification Phosphoserine. Residues 218 to 241 form a C2H2-type zinc finger; sequence VSCGSCKKTFNSGNALESHNKAKH.

This sequence belongs to the histone deacetylase HD2 family. In terms of assembly, interacts with DNMT2. Interacts with DEK3. As to expression, expressed in leaves, roots, stems, young plantlets, flowers and siliques. Highest levels in ovules, embryos, shoot apical meristems and first leaves. Also expressed in somatic embryos.

Its subcellular location is the nucleus. It localises to the nucleolus. Its function is as follows. Probably mediates the deacetylation of lysine residues on the N-terminal part of the core histones (H2A, H2B, H3 and H4). Histone deacetylation gives a tag for epigenetic repression and plays an important role in transcriptional regulation, cell cycle progression and developmental events. Required for histone H3 'Lys-9' deacetylation. Involved in rRNA gene silencing in nucleolar dominance. Seems to be implicated in the regulation of genes involved in seeds development. The protein is Histone deacetylase HDT1 of Arabidopsis thaliana (Mouse-ear cress).